We begin with the raw amino-acid sequence, 224 residues long: uncharacterized protein (224 aa).

The span at 44 to 139 (TSPPIVPLPT…PSPPPSPSPL (96 aa)) shows a compositional bias: pro residues. A disordered region spans residues 44-145 (TSPPIVPLPT…PSPLGEPMYY (102 aa)).

This is an uncharacterized protein from Lepidoptera (butterflies and moths).